We begin with the raw amino-acid sequence, 159 residues long: 4-deoxy-4-sulfo-D-erythrose isomerase (159 aa).

The active-site Proton acceptor is the Cys-66.

It belongs to the LacAB/RpiB family.

It catalyses the reaction 4-deoxy-4-sulfo-D-erythrose = 4-deoxy-4-sulfo-D-erythrulose. Functionally, part of the sulfo-TK pathway, a D-sulfoquinovose degradation pathway that produces 2-hydroxyethane-1-sulfonate (isethionate). Catalyzes the isomerization of 4-deoxy-4-sulfo-D-erythrose (SE) to 4-deoxy-4-sulfo-D-erythrulose (SEu). This is 4-deoxy-4-sulfo-D-erythrose isomerase from Clostridium sp. (strain MSTE9).